Reading from the N-terminus, the 314-residue chain is Cytochrome b558/566 subunit B (314 aa).

8 consecutive transmembrane segments (helical) span residues 47–67 (LLLVIGNISFYFFFVFLLIVS), 76–96 (SLIPLTIILTISPFITLIPNY), 102–122 (LYSLEIAILILGLASTIEGLI), 127–147 (LSILLIPTLVLVNLGIYASIL), 155–175 (LFISYLTIYLISIAGYLAYVI), 186–206 (YIAISVGLLSMIPFIFFENII), 233–253 (HITLLVMALGLSTMGIVTSLI), and 264–284 (FLIITTVFLGIDGFSLLIYML).

The protein resides in the cell membrane. The polypeptide is Cytochrome b558/566 subunit B (cbsB) (Saccharolobus solfataricus (strain ATCC 35092 / DSM 1617 / JCM 11322 / P2) (Sulfolobus solfataricus)).